We begin with the raw amino-acid sequence, 287 residues long: ATP phosphoribosyltransferase (287 aa).

Belongs to the ATP phosphoribosyltransferase family. Long subfamily. In terms of assembly, equilibrium between an active dimeric form, an inactive hexameric form and higher aggregates. Interconversion between the various forms is largely reversible and is influenced by the natural substrates and inhibitors of the enzyme. Mg(2+) serves as cofactor.

It localises to the cytoplasm. It catalyses the reaction 1-(5-phospho-beta-D-ribosyl)-ATP + diphosphate = 5-phospho-alpha-D-ribose 1-diphosphate + ATP. It participates in amino-acid biosynthesis; L-histidine biosynthesis; L-histidine from 5-phospho-alpha-D-ribose 1-diphosphate: step 1/9. Its activity is regulated as follows. Feedback inhibited by histidine. In terms of biological role, catalyzes the condensation of ATP and 5-phosphoribose 1-diphosphate to form N'-(5'-phosphoribosyl)-ATP (PR-ATP). Has a crucial role in the pathway because the rate of histidine biosynthesis seems to be controlled primarily by regulation of HisG enzymatic activity. The chain is ATP phosphoribosyltransferase (hisG) from Mycobacterium leprae (strain TN).